The following is a 699-amino-acid chain: Long-chain-fatty-acid--CoA ligase 1 (699 aa).

Met1 bears the N-acetylmethionine mark. Tyr9 carries the post-translational modification 3'-nitrotyrosine. Residues 25–45 (LPTNTLMGFGAFAALTTFWYA) form a helical; Signal-anchor for type III membrane protein membrane-spanning segment. The Cytoplasmic portion of the chain corresponds to 46 to 699 (TRPKALKPPC…IDELYSTIKI (654 aa)). At Tyr85 the chain carries Phosphotyrosine. The residue at position 86 (Tyr86) is a 3'-nitrotyrosine. The O-linked (GlcNAc) serine glycan is linked to Ser136. N6-acetyllysine is present on residues Lys208, Lys357, and Lys387. Ser621 is subject to Phosphoserine. Lys633 is subject to N6-acetyllysine.

This sequence belongs to the ATP-dependent AMP-binding enzyme family. Requires Mg(2+) as cofactor. As to expression, liver, heart, epididymal adipose and to a lesser extent brain, small intestine and lung.

The protein resides in the mitochondrion outer membrane. It localises to the peroxisome membrane. Its subcellular location is the microsome membrane. It is found in the endoplasmic reticulum membrane. The enzyme catalyses a long-chain fatty acid + ATP + CoA = a long-chain fatty acyl-CoA + AMP + diphosphate. It catalyses the reaction (5Z,8Z,11Z,14Z)-eicosatetraenoate + ATP + CoA = (5Z,8Z,11Z,14Z)-eicosatetraenoyl-CoA + AMP + diphosphate. The catalysed reaction is 3,7,11,15-tetramethylhexadecanoate + ATP + CoA = phytanoyl-CoA + AMP + diphosphate. It carries out the reaction hexadecanoate + ATP + CoA = hexadecanoyl-CoA + AMP + diphosphate. The enzyme catalyses (E)-hexadec-2-enoate + ATP + CoA = (2E)-hexadecenoyl-CoA + AMP + diphosphate. It catalyses the reaction 2,6,10,14-tetramethylpentadecanoate + ATP + CoA = pristanoyl-CoA + AMP + diphosphate. The catalysed reaction is 14,15-epoxy-(5Z,8Z,11Z)-eicosatrienoate + ATP + CoA = 14,15-epoxy-(5Z,8Z,11Z)-eicosatrienoyl-CoA + AMP + diphosphate. It carries out the reaction 5-hydroxy-(6E,8Z,11Z,14Z)-eicosatetraenoate + ATP + CoA = 5-hydroxy-(6E,8Z,11Z,14Z)-eicosatetraenoyl-CoA + AMP + diphosphate. The enzyme catalyses 12-hydroxy-(5Z,8Z,10E,14Z)-eicosatetraenoate + ATP + CoA = 12-hydroxy-(5Z,8Z,10E,14Z)-eicosatetraenoyl-CoA + AMP + diphosphate. It catalyses the reaction 15-hydroxy-(5Z,8Z,11Z,13E)-eicosatetraenoate + ATP + CoA = 15-hydroxy-(5Z,8Z,11Z,13E)-eicosatetraenoyl-CoA + AMP + diphosphate. The catalysed reaction is (9Z)-octadecenoate + ATP + CoA = (9Z)-octadecenoyl-CoA + AMP + diphosphate. Inhibited at high temperature and by arachidonate. Its function is as follows. Catalyzes the conversion of long-chain fatty acids to their active form acyl-CoAs for both synthesis of cellular lipids, and degradation via beta-oxidation. Preferentially uses palmitoleate, oleate and linoleate. Preferentially activates arachidonate than epoxyeicosatrienoic acids (EETs) or hydroxyeicosatrienoic acids (HETEs). The sequence is that of Long-chain-fatty-acid--CoA ligase 1 from Rattus norvegicus (Rat).